Here is a 124-residue protein sequence, read N- to C-terminus: Small ribosomal subunit protein uS12 (124 aa).

Position 89 is a 3-methylthioaspartic acid (aspartate 89).

It belongs to the universal ribosomal protein uS12 family. Part of the 30S ribosomal subunit. Contacts proteins S8 and S17. May interact with IF1 in the 30S initiation complex.

Its function is as follows. With S4 and S5 plays an important role in translational accuracy. In terms of biological role, interacts with and stabilizes bases of the 16S rRNA that are involved in tRNA selection in the A site and with the mRNA backbone. Located at the interface of the 30S and 50S subunits, it traverses the body of the 30S subunit contacting proteins on the other side and probably holding the rRNA structure together. The combined cluster of proteins S8, S12 and S17 appears to hold together the shoulder and platform of the 30S subunit. The sequence is that of Small ribosomal subunit protein uS12 from Erwinia amylovora (Fire blight bacteria).